The chain runs to 217 residues: UPF0319 protein VS_II0881 (217 aa).

The N-terminal stretch at 1-21 (MKTIQSIALLSAIVAAPSVLA) is a signal peptide.

Belongs to the UPF0319 family.

The protein is UPF0319 protein VS_II0881 of Vibrio atlanticus (strain LGP32) (Vibrio splendidus (strain Mel32)).